The following is a 356-amino-acid chain: Beta-hexosaminidase (356 aa).

Substrate-binding positions include D75, R83, R150, and 180 to 181; that span reads KH. H193 serves as the catalytic Proton donor/acceptor. D264 functions as the Nucleophile in the catalytic mechanism.

It belongs to the glycosyl hydrolase 3 family. NagZ subfamily.

It localises to the cytoplasm. It catalyses the reaction Hydrolysis of terminal non-reducing N-acetyl-D-hexosamine residues in N-acetyl-beta-D-hexosaminides.. The protein operates within cell wall biogenesis; peptidoglycan recycling. Plays a role in peptidoglycan recycling by cleaving the terminal beta-1,4-linked N-acetylglucosamine (GlcNAc) from peptide-linked peptidoglycan fragments, giving rise to free GlcNAc, anhydro-N-acetylmuramic acid and anhydro-N-acetylmuramic acid-linked peptides. The sequence is that of Beta-hexosaminidase from Aromatoleum aromaticum (strain DSM 19018 / LMG 30748 / EbN1) (Azoarcus sp. (strain EbN1)).